A 685-amino-acid polypeptide reads, in one-letter code: Putative protein FAR1-RELATED SEQUENCE 10 (685 aa).

Residues 69 to 161 (EYYSTFARKS…SNVHNHELLE (93 aa)) enclose the FAR1 domain. In terms of domain architecture, MULE spans 292-388 (VVVFDTSYRS…FMSHIVSKLA (97 aa)). The SWIM-type zinc-finger motif lies at 565–603 (GECCVIWNPENEEIQCSCKEFEHSGILCRHTLRVLTVKN).

Belongs to the FHY3/FAR1 family.

The sequence is that of Putative protein FAR1-RELATED SEQUENCE 10 (FRS10) from Arabidopsis thaliana (Mouse-ear cress).